Reading from the N-terminus, the 368-residue chain is Biglycan (368 aa).

The N-terminal stretch at 1-16 (MKVLLLLCSCILVIHA) is a signal peptide. A propeptide spanning residues 17-37 (LPFEQRGFWDFSMDDGMAMMK) is cleaved from the precursor. 2 disulfide bridges follow: Cys63–Cys69 and Cys67–Cys76. 12 LRR repeats span residues 82-102 (TSIP…NNKI), 103-126 (TEIK…NNKI), 127-150 (SKIN…KNNL), 151-171 (EEIP…ENKI), 172-195 (KKVP…GNPL), 196-220 (ENGG…EAKL), 221-241 (SGIP…NNKI), 242-265 (QAIE…HNNI), 266-289 (RMIE…NNKL), 290-312 (SKVP…SNNI), 313-342 (TQVG…NNPV), and 343-368 (PYWE…NYRK). Asn270 and Asn311 each carry an N-linked (GlcNAc...) asparagine glycan. An intrachain disulfide couples Cys321 to Cys354.

This sequence belongs to the small leucine-rich proteoglycan (SLRP) family. SLRP class I subfamily.

The protein resides in the secreted. It localises to the extracellular space. Its subcellular location is the extracellular matrix. Its function is as follows. May be involved in collagen fiber assembly. The protein is Biglycan (bgn) of Xenopus laevis (African clawed frog).